A 562-amino-acid chain; its full sequence is Adenylate kinase isoenzyme 5 (562 aa).

2 adenylate kinase regions span residues 133-316 (KIIL…MAVD) and 377-559 (KIIF…TAID). Residue 142–147 (GSGKGT) participates in ATP binding. Residues 162 to 193 (SVGELLRKKIHSTSSNRKWSLIAKIITTGELA) form an NMP 1 region. AMP is bound by residues Arg168, 191–193 (ELA), 219–222 (GFPR), and Gln226. An LID 1 region spans residues 256 to 266 (KRAEQQGRPDD). Position 257 (Arg257) interacts with ATP. Residues Arg263 and Arg274 each contribute to the AMP site. 386-391 (GSGKGT) provides a ligand contact to ATP. The tract at residues 406–435 (STDELLQNELSSESGRSKLIRDIMERGELV) is NMP 2. AMP is bound by residues Thr407, 433 to 435 (ELV), 462 to 465 (GYPR), and Gln469. The segment at 499–509 (QRSRNSPQADD) is LID 2. ATP is bound at residue Arg500. Arg517 is a binding site for AMP. Gly545 lines the ATP pocket.

It belongs to the adenylate kinase family. In terms of assembly, monomer.

The protein localises to the cytoplasm. It carries out the reaction AMP + ATP = 2 ADP. The enzyme catalyses a 2'-deoxyribonucleoside 5'-diphosphate + ATP = a 2'-deoxyribonucleoside 5'-triphosphate + ADP. The catalysed reaction is a ribonucleoside 5'-diphosphate + ATP = a ribonucleoside 5'-triphosphate + ADP. In terms of biological role, nucleoside monophosphate (NMP) kinase that catalyzes the reversible transfer of the terminal phosphate group between nucleoside triphosphates and monophosphates. Active on AMP and dAMP with ATP as a donor. When GTP is used as phosphate donor, the enzyme phosphorylates AMP, CMP, and to a small extent dCMP. Also displays broad nucleoside diphosphate kinase activity. The polypeptide is Adenylate kinase isoenzyme 5 (Ak5) (Bos taurus (Bovine)).